We begin with the raw amino-acid sequence, 185 residues long: Peptidyl-tRNA hydrolase (185 aa).

Tyr15 contributes to the tRNA binding site. His20 (proton acceptor) is an active-site residue. TRNA is bound by residues Tyr64, Asn66, and Asn112.

It belongs to the PTH family. Monomer.

It localises to the cytoplasm. It catalyses the reaction an N-acyl-L-alpha-aminoacyl-tRNA + H2O = an N-acyl-L-amino acid + a tRNA + H(+). Its function is as follows. Hydrolyzes ribosome-free peptidyl-tRNAs (with 1 or more amino acids incorporated), which drop off the ribosome during protein synthesis, or as a result of ribosome stalling. In terms of biological role, catalyzes the release of premature peptidyl moieties from peptidyl-tRNA molecules trapped in stalled 50S ribosomal subunits, and thus maintains levels of free tRNAs and 50S ribosomes. This Porphyromonas gingivalis (strain ATCC BAA-308 / W83) protein is Peptidyl-tRNA hydrolase.